Here is a 345-residue protein sequence, read N- to C-terminus: Ubiquinone biosynthesis O-methyltransferase, mitochondrial (345 aa).

The N-terminal 86 residues, 1 to 86 (MWRGGRLSSR…TYRSSWKKLY (86 aa)), are a transit peptide targeting the mitochondrion. An S-adenosyl-L-methionine-binding site is contributed by Arg-124. 2 positions are modified to N6-acetyllysine: Lys-143 and Lys-149. S-adenosyl-L-methionine contacts are provided by Gly-154 and Asp-175. An N6-acetyllysine modification is found at Lys-196. Ser-222 contacts S-adenosyl-L-methionine. Mg(2+) contacts are provided by Glu-223, Glu-226, and His-227.

This sequence belongs to the class I-like SAM-binding methyltransferase superfamily. UbiG/COQ3 family. As to quaternary structure, component of a multi-subunit COQ enzyme complex, composed of at least COQ3, COQ4, COQ5, COQ6, COQ7 and COQ9. Mg(2+) is required as a cofactor.

The protein resides in the mitochondrion inner membrane. The enzyme catalyses 3,4-dihydroxy-5-(all-trans-decaprenyl)benzoate + S-adenosyl-L-methionine = 4-hydroxy-3-methoxy-5-(all-trans-decaprenyl)benzoate + S-adenosyl-L-homocysteine + H(+). It catalyses the reaction a 3-demethylubiquinone + S-adenosyl-L-methionine = a ubiquinone + S-adenosyl-L-homocysteine. The catalysed reaction is 3-demethylubiquinol-10 + S-adenosyl-L-methionine = ubiquinol-10 + S-adenosyl-L-homocysteine + H(+). It functions in the pathway cofactor biosynthesis; ubiquinone biosynthesis. O-methyltransferase required for two non-consecutive steps during ubiquinone biosynthesis. Catalyzes the 2 O-methylation of 3,4-dihydroxy-5-(all-trans-decaprenyl)benzoic acid into 4-hydroxy-3-methoxy-5-(all-trans-decaprenyl)benzoic acid. Also catalyzes the last step of ubiquinone biosynthesis by mediating methylation of 3-demethylubiquinone into ubiquinone. Also able to mediate the methylation of 3-demethylubiquinol-10 into ubiquinol-10. This Rattus norvegicus (Rat) protein is Ubiquinone biosynthesis O-methyltransferase, mitochondrial.